The primary structure comprises 282 residues: Shikimate dehydrogenase (NADP(+)) (282 aa).

Shikimate contacts are provided by residues Ser16 to Ser18 and Thr63. The Proton acceptor role is filled by Lys67. Positions 88 and 103 each coordinate shikimate. NADP(+) contacts are provided by residues Gly128–Ala132 and Gly243.

This sequence belongs to the shikimate dehydrogenase family. In terms of assembly, homodimer.

The enzyme catalyses shikimate + NADP(+) = 3-dehydroshikimate + NADPH + H(+). It functions in the pathway metabolic intermediate biosynthesis; chorismate biosynthesis; chorismate from D-erythrose 4-phosphate and phosphoenolpyruvate: step 4/7. Its function is as follows. Involved in the biosynthesis of the chorismate, which leads to the biosynthesis of aromatic amino acids. Catalyzes the reversible NADPH linked reduction of 3-dehydroshikimate (DHSA) to yield shikimate (SA). This chain is Shikimate dehydrogenase (NADP(+)), found in Xylella fastidiosa (strain 9a5c).